A 196-amino-acid polypeptide reads, in one-letter code: Adenylate kinase (196 aa).

Residue G9 to T17 coordinates ATP.

This sequence belongs to the archaeal adenylate kinase family.

Its subcellular location is the cytoplasm. The catalysed reaction is AMP + ATP = 2 ADP. The chain is Adenylate kinase (adkA) from Pyrococcus abyssi (strain GE5 / Orsay).